We begin with the raw amino-acid sequence, 687 residues long: Macrolide export ATP-binding/permease protein MacB (687 aa).

The ABC transporter domain occupies 6 to 244 (LKLAAVTRRF…LAEAGVDAAE (239 aa)). Residue 42–49 (GASGSGKS) coordinates ATP. Residues 246 to 256 (AEASEAAVGES) show a composition bias toward low complexity. Positions 246–281 (AEASEAAVGESPTRNRHDTPAPPAAVDTDPHVDTGT) are disordered. Helical transmembrane passes span 312-332 (LLTMLGIIIGITSVVSIVAIG), 560-580 (LTLLLSLIAVISLVVGGIGVM), 617-637 (LVCLLGGTIGIALSFGLGALF), and 650-670 (AGAIVTAFVCSTLTGVIFGFM).

It belongs to the ABC transporter superfamily. Macrolide exporter (TC 3.A.1.122) family. Homodimer.

The protein resides in the cell inner membrane. Functionally, non-canonical ABC transporter that contains transmembrane domains (TMD), which form a pore in the inner membrane, and an ATP-binding domain (NBD), which is responsible for energy generation. Confers resistance against macrolides. This Burkholderia lata (strain ATCC 17760 / DSM 23089 / LMG 22485 / NCIMB 9086 / R18194 / 383) protein is Macrolide export ATP-binding/permease protein MacB.